A 139-amino-acid polypeptide reads, in one-letter code: Large-conductance mechanosensitive channel (139 aa).

The next 3 helical transmembrane spans lie at 14–34, 38–58, and 82–102; these read VVDL…VNSA, IFMP…YYIP, and GQFL…FLVI.

Belongs to the MscL family. As to quaternary structure, homopentamer.

It is found in the cell inner membrane. Its function is as follows. Channel that opens in response to stretch forces in the membrane lipid bilayer. May participate in the regulation of osmotic pressure changes within the cell. The polypeptide is Large-conductance mechanosensitive channel (Methylobacterium radiotolerans (strain ATCC 27329 / DSM 1819 / JCM 2831 / NBRC 15690 / NCIMB 10815 / 0-1)).